Reading from the N-terminus, the 655-residue chain is p-hydroxybenzoic acid efflux pump subunit AaeB (655 aa).

Residues Met1–Arg12 are Periplasmic-facing. Residues Phe13 to Leu33 traverse the membrane as a helical segment. Topologically, residues Glu34–Arg37 are cytoplasmic. A helical membrane pass occupies residues Trp38–Pro58. The Periplasmic segment spans residues Tyr59 to Met68. Residues Leu69–Ile89 form a helical membrane-spanning segment. Over Arg90–Pro92 the chain is Cytoplasmic. The chain crosses the membrane as a helical span at residues Leu93–Val113. Topologically, residues Arg114–Ala120 are periplasmic. A helical transmembrane segment spans residues Trp121 to Leu141. Topologically, residues Thr142–Ser151 are cytoplasmic. A helical membrane pass occupies residues Glu152 to Ile172. Over Lys173–Thr369 the chain is Periplasmic. A helical transmembrane segment spans residues Leu370–Val390. At Thr391–Asp406 the chain is on the cytoplasmic side. A helical membrane pass occupies residues Phe407 to Pro427. The Periplasmic portion of the chain corresponds to Asn428–Gln430. A helical transmembrane segment spans residues Gln431–Val451. The Cytoplasmic portion of the chain corresponds to Gln452–Met459. Residues Gly460–Ile480 traverse the membrane as a helical segment. A topological domain (periplasmic) is located at residue Gln481. The chain crosses the membrane as a helical span at residues Phe482 to Leu502. Residues Val503–Ser655 are Cytoplasmic-facing.

This sequence belongs to the aromatic acid exporter ArAE (TC 2.A.85) family.

It is found in the cell inner membrane. Forms an efflux pump with AaeA. Could function as a metabolic relief valve, allowing to eliminate certain compounds when they accumulate to high levels in the cell. The protein is p-hydroxybenzoic acid efflux pump subunit AaeB of Salmonella typhi.